Reading from the N-terminus, the 89-residue chain is NADH-ubiquinone oxidoreductase chain 4L (89 aa).

The next 3 membrane-spanning stretches (helical) occupy residues methionine 1–asparagine 21, isoleucine 22–valine 42, and isoleucine 57–phenylalanine 77.

The protein belongs to the complex I subunit 4L family.

The protein localises to the mitochondrion membrane. It carries out the reaction a ubiquinone + NADH + 5 H(+)(in) = a ubiquinol + NAD(+) + 4 H(+)(out). Functionally, core subunit of the mitochondrial membrane respiratory chain NADH dehydrogenase (Complex I) that is believed to belong to the minimal assembly required for catalysis. Complex I functions in the transfer of electrons from NADH to the respiratory chain. The immediate electron acceptor for the enzyme is believed to be ubiquinone. The polypeptide is NADH-ubiquinone oxidoreductase chain 4L (ND4L) (Hypocrea jecorina (Trichoderma reesei)).